A 518-amino-acid polypeptide reads, in one-letter code: Bifunctional purine biosynthesis protein PurH (518 aa).

Residues 1–144 enclose the MGS-like domain; sequence MNRRAVLSVS…KNQERVSIVV (144 aa).

This sequence belongs to the PurH family.

The enzyme catalyses (6R)-10-formyltetrahydrofolate + 5-amino-1-(5-phospho-beta-D-ribosyl)imidazole-4-carboxamide = 5-formamido-1-(5-phospho-D-ribosyl)imidazole-4-carboxamide + (6S)-5,6,7,8-tetrahydrofolate. It carries out the reaction IMP + H2O = 5-formamido-1-(5-phospho-D-ribosyl)imidazole-4-carboxamide. It functions in the pathway purine metabolism; IMP biosynthesis via de novo pathway; 5-formamido-1-(5-phospho-D-ribosyl)imidazole-4-carboxamide from 5-amino-1-(5-phospho-D-ribosyl)imidazole-4-carboxamide (10-formyl THF route): step 1/1. The protein operates within purine metabolism; IMP biosynthesis via de novo pathway; IMP from 5-formamido-1-(5-phospho-D-ribosyl)imidazole-4-carboxamide: step 1/1. This is Bifunctional purine biosynthesis protein PurH from Desulfitobacterium hafniense (strain DSM 10664 / DCB-2).